Consider the following 282-residue polypeptide: Putative hydrolase Bmul_3283/BMULJ_05242 (282 aa).

Residues Glu124, Glu126, and Asp155 each coordinate Mg(2+).

Belongs to the FAH family. The cofactor is Mg(2+).

This chain is Putative hydrolase Bmul_3283/BMULJ_05242, found in Burkholderia multivorans (strain ATCC 17616 / 249).